The primary structure comprises 49 residues: Large ribosomal subunit protein bL33 (49 aa).

Belongs to the bacterial ribosomal protein bL33 family.

In Clostridium beijerinckii (strain ATCC 51743 / NCIMB 8052) (Clostridium acetobutylicum), this protein is Large ribosomal subunit protein bL33.